Reading from the N-terminus, the 263-residue chain is 3-methyl-2-oxobutanoate hydroxymethyltransferase (263 aa).

Mg(2+) contacts are provided by Asp-43 and Asp-82. Residues 43–44, Asp-82, and Lys-111 contribute to the 3-methyl-2-oxobutanoate site; that span reads DS. Glu-113 contacts Mg(2+). Glu-179 acts as the Proton acceptor in catalysis.

Belongs to the PanB family. In terms of assembly, homodecamer; pentamer of dimers. Mg(2+) serves as cofactor.

It is found in the cytoplasm. The catalysed reaction is 3-methyl-2-oxobutanoate + (6R)-5,10-methylene-5,6,7,8-tetrahydrofolate + H2O = 2-dehydropantoate + (6S)-5,6,7,8-tetrahydrofolate. It participates in cofactor biosynthesis; (R)-pantothenate biosynthesis; (R)-pantoate from 3-methyl-2-oxobutanoate: step 1/2. Its function is as follows. Catalyzes the reversible reaction in which hydroxymethyl group from 5,10-methylenetetrahydrofolate is transferred onto alpha-ketoisovalerate to form ketopantoate. In Neisseria meningitidis serogroup A / serotype 4A (strain DSM 15465 / Z2491), this protein is 3-methyl-2-oxobutanoate hydroxymethyltransferase.